A 395-amino-acid polypeptide reads, in one-letter code: Pesticidal crystal protein Cry6Ba (395 aa).

The protein belongs to the cry6A endotoxin family.

Its function is as follows. Endotoxin with nematicidal activity. This Bacillus thuringiensis protein is Pesticidal crystal protein Cry6Ba (cry6Ba).